The primary structure comprises 228 residues: Ornithine decarboxylase antizyme 1 (228 aa).

The tract at residues 17 to 55 (REKEGDKPSATIHASRTMPLLSLHSRGGSSSESSRVSLH) is disordered. Over residues 36 to 55 (LLSLHSRGGSSSESSRVSLH) the composition is skewed to low complexity.

The protein belongs to the ODC antizyme family. Interacts with ODC1 and thereby sterically blocks ODC homodimerization. Forms a ternary complex with PSMB4 and OAZ1 before PSMB4 is incorporated into the 20S proteasome. Interacts with AZIN2; this interaction disrupts the interaction between the antizyme and ODC1. Interacts with FAM171A1.

Functionally, ornithine decarboxylase (ODC) antizyme protein that negatively regulates ODC activity and intracellular polyamine biosynthesis and uptake in response to increased intracellular polyamine levels. Binds to ODC monomers, inhibiting the assembly of the functional ODC homodimer, and targets the monomers for ubiquitin-independent proteolytic destruction by the 26S proteasome. Triggers ODC degradation by inducing the exposure of a cryptic proteasome-interacting surface of ODC. Stabilizes AZIN2 by interfering with its ubiquitination. Also inhibits cellular uptake of polyamines by inactivating the polyamine uptake transporter. SMAD1/OAZ1/PSMB4 complex mediates the degradation of the CREBBP/EP300 repressor SNIP1. Involved in the translocation of AZIN2 from ER-Golgi intermediate compartment (ERGIC) to the cytosol. This is Ornithine decarboxylase antizyme 1 (OAZ1) from Homo sapiens (Human).